We begin with the raw amino-acid sequence, 552 residues long: Urocanate hydratase (552 aa).

NAD(+)-binding positions include 49 to 50, Gln127, 173 to 175, Asp193, 239 to 240, 260 to 264, 270 to 271, and Tyr319; these read GG, GMG, NA, QTSAH, and YI. Cys407 is an active-site residue. Gly489 lines the NAD(+) pocket.

It belongs to the urocanase family. It depends on NAD(+) as a cofactor.

It is found in the cytoplasm. The catalysed reaction is 4-imidazolone-5-propanoate = trans-urocanate + H2O. The protein operates within amino-acid degradation; L-histidine degradation into L-glutamate; N-formimidoyl-L-glutamate from L-histidine: step 2/3. Catalyzes the conversion of urocanate to 4-imidazolone-5-propionate. The polypeptide is Urocanate hydratase (Bacillus cereus (strain 03BB102)).